The following is a 183-amino-acid chain: Hypoxanthine-guanine-xanthine phosphoribosyltransferase (183 aa).

GMP contacts are provided by residues 102 to 110 (EDIIDTGLT), lysine 134, and aspartate 163. The active-site Proton acceptor is the aspartate 106. Aspartate 163 lines the Mg(2+) pocket.

In terms of assembly, homodimer. Requires Mg(2+) as cofactor.

It localises to the cytoplasm. It catalyses the reaction IMP + diphosphate = hypoxanthine + 5-phospho-alpha-D-ribose 1-diphosphate. It carries out the reaction GMP + diphosphate = guanine + 5-phospho-alpha-D-ribose 1-diphosphate. The enzyme catalyses XMP + diphosphate = xanthine + 5-phospho-alpha-D-ribose 1-diphosphate. Its pathway is purine metabolism; GMP biosynthesis via salvage pathway; GMP from guanine: step 1/1. It participates in purine metabolism; IMP biosynthesis via salvage pathway; IMP from hypoxanthine: step 1/1. It functions in the pathway purine metabolism; XMP biosynthesis via salvage pathway; XMP from xanthine: step 1/1. Functionally, essential in nucleic acid metabolism of T.foetus because the parasite is unable to synthesize purine nucleotides de novo and relies on the HGXPRTase activities for its purine requirements by salvaging purine bases from the host. Works with guanine, hypoxanthine and xanthine. The sequence is that of Hypoxanthine-guanine-xanthine phosphoribosyltransferase (HPT) from Tritrichomonas foetus (Trichomonas foetus).